The following is a 618-amino-acid chain: UvrABC system protein C (618 aa).

A GIY-YIG domain is found at 19 to 97; sequence SEPGIYRMLD…IKALRPKYNV (79 aa). The UVR domain occupies 208–243; it reads QIILDALAERMKQAVNQLNFEEAAVLRDQIKNLRLI.

The protein belongs to the UvrC family. As to quaternary structure, interacts with UvrB in an incision complex.

Its subcellular location is the cytoplasm. The UvrABC repair system catalyzes the recognition and processing of DNA lesions. UvrC both incises the 5' and 3' sides of the lesion. The N-terminal half is responsible for the 3' incision and the C-terminal half is responsible for the 5' incision. This Legionella pneumophila (strain Paris) protein is UvrABC system protein C.